A 403-amino-acid polypeptide reads, in one-letter code: Cytochrome P450-SU2 (403 aa).

A disordered region spans residues 1-24; sequence MTTAERTAPPDALTVPASRAPGCP. Position 352 (Cys352) interacts with heme.

It belongs to the cytochrome P450 family. Heme is required as a cofactor.

In terms of biological role, metabolism of a number of sulfonylurea herbicides. The polypeptide is Cytochrome P450-SU2 (cyp105B1) (Streptomyces griseolus).